Here is a 101-residue protein sequence, read N- to C-terminus: Urease subunit beta (101 aa).

Belongs to the urease beta subunit family. In terms of assembly, heterotrimer of UreA (gamma), UreB (beta) and UreC (alpha) subunits. Three heterotrimers associate to form the active enzyme.

Its subcellular location is the cytoplasm. It carries out the reaction urea + 2 H2O + H(+) = hydrogencarbonate + 2 NH4(+). It participates in nitrogen metabolism; urea degradation; CO(2) and NH(3) from urea (urease route): step 1/1. This Mesorhizobium japonicum (strain LMG 29417 / CECT 9101 / MAFF 303099) (Mesorhizobium loti (strain MAFF 303099)) protein is Urease subunit beta.